The chain runs to 273 residues: tRNA (guanine-N(7)-)-methyltransferase (273 aa).

The segment covering 1–31 (MSQHPDINTNVDATSLTDDQKSLDTNATSGN) has biased composition (polar residues). The segment at 1–36 (MSQHPDINTNVDATSLTDDQKSLDTNATSGNEVAPD) is disordered. Residues Glu105, Glu130, Asp157, and Asp179 each coordinate S-adenosyl-L-methionine. Residue Asp179 is part of the active site. Residues Lys183, Asp215, and 252-255 (TKFE) each bind substrate.

Belongs to the class I-like SAM-binding methyltransferase superfamily. TrmB family.

The enzyme catalyses guanosine(46) in tRNA + S-adenosyl-L-methionine = N(7)-methylguanosine(46) in tRNA + S-adenosyl-L-homocysteine. It participates in tRNA modification; N(7)-methylguanine-tRNA biosynthesis. Its function is as follows. Catalyzes the formation of N(7)-methylguanine at position 46 (m7G46) in tRNA. The chain is tRNA (guanine-N(7)-)-methyltransferase from Psychrobacter cryohalolentis (strain ATCC BAA-1226 / DSM 17306 / VKM B-2378 / K5).